Consider the following 451-residue polypeptide: UDP-N-acetylmuramoylalanine--D-glutamate ligase (451 aa).

Position 118-124 (118-124 (GSNGKTT)) interacts with ATP.

The protein belongs to the MurCDEF family.

The protein localises to the cytoplasm. It catalyses the reaction UDP-N-acetyl-alpha-D-muramoyl-L-alanine + D-glutamate + ATP = UDP-N-acetyl-alpha-D-muramoyl-L-alanyl-D-glutamate + ADP + phosphate + H(+). It participates in cell wall biogenesis; peptidoglycan biosynthesis. Its function is as follows. Cell wall formation. Catalyzes the addition of glutamate to the nucleotide precursor UDP-N-acetylmuramoyl-L-alanine (UMA). The polypeptide is UDP-N-acetylmuramoylalanine--D-glutamate ligase (Shouchella clausii (strain KSM-K16) (Alkalihalobacillus clausii)).